The following is a 387-amino-acid chain: 2-alkyl-3-oxoalkanoate reductase (387 aa).

Y190 (proton acceptor) is an active-site residue. Residue K194 coordinates NADP(+).

This sequence belongs to the 3-beta-HSD family.

The catalysed reaction is a (2R,3S)-2-alkyl-3-hydroxyalkanoate + NADP(+) = an (R)-2-alkyl-3-oxoalkanoate + NADPH + H(+). Involved in olefin biosynthesis. Catalyzes the reversible stereospecific NADPH-dependent reduction of 2-alkyl-3-oxoalkanoic acids to 2-alkyl-3-hydroxyalkanoic acids. The S.oneidensis oleABCD genes produce 3,6,9,12,15,19,22,25,28-hentriacontanonaene, which may aid the cells in adapting to a sudden drop in temperature. The protein is 2-alkyl-3-oxoalkanoate reductase of Shewanella oneidensis (strain ATCC 700550 / JCM 31522 / CIP 106686 / LMG 19005 / NCIMB 14063 / MR-1).